Here is a 352-residue protein sequence, read N- to C-terminus: Protein RecA (352 aa).

Residue G65–T72 participates in ATP binding.

Belongs to the RecA family.

It is found in the cytoplasm. In terms of biological role, can catalyze the hydrolysis of ATP in the presence of single-stranded DNA, the ATP-dependent uptake of single-stranded DNA by duplex DNA, and the ATP-dependent hybridization of homologous single-stranded DNAs. It interacts with LexA causing its activation and leading to its autocatalytic cleavage. This chain is Protein RecA, found in Pseudomonas fluorescens (strain SBW25).